The chain runs to 119 residues: Class I hydrophobin 2 (119 aa).

The N-terminal stretch at 1-22 (MFARISTIITTLFFAMLAAATA) is a signal peptide. Intrachain disulfides connect Cys-36-Cys-97, Cys-45-Cys-91, Cys-46-Cys-79, and Cys-98-Cys-112.

Belongs to the fungal hydrophobin family. Self-assembles to form functional amyloid fibrils called rodlets. Self-assembly into fibrillar rodlets occurs spontaneously at hydrophobic:hydrophilic interfaces and the rodlets further associate laterally to form amphipathic monolayers.

The protein resides in the secreted. The protein localises to the cell wall. Aerial growth, conidiation, and dispersal of filamentous fungi in the environment rely upon a capability of their secreting small amphipathic proteins called hydrophobins (HPBs) with low sequence identity. Class I can self-assemble into an outermost layer of rodlet bundles on aerial cell surfaces, conferring cellular hydrophobicity that supports fungal growth, development and dispersal; whereas Class II form highly ordered films at water-air interfaces through intermolecular interactions but contribute nothing to the rodlet structure. Abh2 is a class I hydrophobin involved in the emergence of aerial hyphae and strands. The chain is Class I hydrophobin 2 from Agaricus bisporus (White button mushroom).